The following is a 173-amino-acid chain: ATP synthase subunit b (173 aa).

The helical transmembrane segment at L25–G45 threads the bilayer.

This sequence belongs to the ATPase B chain family. As to quaternary structure, F-type ATPases have 2 components, F(1) - the catalytic core - and F(0) - the membrane proton channel. F(1) has five subunits: alpha(3), beta(3), gamma(1), delta(1), epsilon(1). F(0) has four main subunits: a(1), b(1), b'(1) and c(10-14). The alpha and beta chains form an alternating ring which encloses part of the gamma chain. F(1) is attached to F(0) by a central stalk formed by the gamma and epsilon chains, while a peripheral stalk is formed by the delta, b and b' chains.

Its subcellular location is the cellular thylakoid membrane. Functionally, f(1)F(0) ATP synthase produces ATP from ADP in the presence of a proton or sodium gradient. F-type ATPases consist of two structural domains, F(1) containing the extramembraneous catalytic core and F(0) containing the membrane proton channel, linked together by a central stalk and a peripheral stalk. During catalysis, ATP synthesis in the catalytic domain of F(1) is coupled via a rotary mechanism of the central stalk subunits to proton translocation. Component of the F(0) channel, it forms part of the peripheral stalk, linking F(1) to F(0). This chain is ATP synthase subunit b, found in Synechococcus sp. (strain CC9311).